The primary structure comprises 116 residues: Carbohydrate-binding protein AQN-3 (116 aa).

Residues Cys-9 and Cys-30 are joined by a disulfide bond. A CUB domain is found at 9–110 (CGGFLKNYSG…SSFNVYFYGI (102 aa)). Asn-50 carries an N-linked (GlcNAc...) asparagine glycan. Cys-53 and Cys-74 are oxidised to a cystine. His-85 is modified (methylhistidine).

The protein belongs to the spermadhesin family. In terms of processing, the residue at position 85 was identified as a methylhistidine by mass spectrometry.

Its subcellular location is the secreted. In terms of biological role, AQN proteins mediate the binding of boar spermatozoa to component(s) of the egg's zona pellucida by a carbohydrate-binding mechanism. AQN proteins are secretory components of the male accessory glands being coated to the sperm surface at the time of ejaculation. They possess as well heparin-, serine-protease-inhibitor-binding capability. The polypeptide is Carbohydrate-binding protein AQN-3 (Sus scrofa (Pig)).